A 236-amino-acid chain; its full sequence is Thylakoid lumenal 17.4 kDa protein, chloroplastic (236 aa).

Pentapeptide repeat domains lie at 124 to 163 and 169 to 208; these read TNLKGKTLSAALMVGAKFDGADMTEVVMSKAYAVEASFKG and AVIDRVNFGKSNLKGAVFRNTVLSGSTFEEANLEDVVFED.

As to quaternary structure, interacts in vitro with LTO1.

It is found in the plastid. Its subcellular location is the chloroplast thylakoid lumen. In Arabidopsis thaliana (Mouse-ear cress), this protein is Thylakoid lumenal 17.4 kDa protein, chloroplastic.